A 263-amino-acid polypeptide reads, in one-letter code: Pimeloyl-[acyl-carrier protein] methyl ester esterase (263 aa).

Substrate contacts are provided by residues Trp28, 86-87 (SL), and 149-153 (FLAIQ). Ser86 acts as the Nucleophile in catalysis. Active-site residues include Asp213 and His240. Substrate is bound at residue His240.

Belongs to the AB hydrolase superfamily. Carboxylesterase BioH family. As to quaternary structure, monomer.

It is found in the cytoplasm. It carries out the reaction 6-carboxyhexanoyl-[ACP] methyl ester + H2O = 6-carboxyhexanoyl-[ACP] + methanol + H(+). The protein operates within cofactor biosynthesis; biotin biosynthesis. Functionally, the physiological role of BioH is to remove the methyl group introduced by BioC when the pimeloyl moiety is complete. It allows to synthesize pimeloyl-ACP via the fatty acid synthetic pathway through the hydrolysis of the ester bonds of pimeloyl-ACP esters. In Shewanella oneidensis (strain ATCC 700550 / JCM 31522 / CIP 106686 / LMG 19005 / NCIMB 14063 / MR-1), this protein is Pimeloyl-[acyl-carrier protein] methyl ester esterase.